We begin with the raw amino-acid sequence, 783 residues long: Ubiquitin carboxyl-terminal hydrolase 1 (783 aa).

Disordered stretches follow at residues 1–22 (MPGVIPSESNGLSRGSPSKKNR) and 34–55 (KRALDFTDSQENEEKTSEYKGS). A compositionally biased stretch (polar residues) spans 7–16 (SESNGLSRGS). Phosphoserine occurs at positions 16 and 42. The segment covering 45 to 55 (NEEKTSEYKGS) has biased composition (basic and acidic residues). The residue at position 67 (Ser67) is a Phosphoserine. The USP domain occupies 81 to 783 (VGLNNLGNTC…TPYLLFYKKL (703 aa)). The active-site Nucleophile is Cys90. The disordered stretch occupies residues 234-311 (EEYQKEEMSD…RKAAGDTLEI (78 aa)). Basic and acidic residues-rich tracts occupy residues 250–273 (DNMRHSEDYKEKLSKGNGKRKSDA) and 284–296 (ISKEHQSSEENQR). The residue at position 473 (Ser473) is a Phosphoserine. His591 (proton acceptor) is an active-site residue. Residues 685–722 (PDKVASTALPENRNSETNNTNGTDESDSNKESSDQTGI) form a disordered region. Ser766 is modified (phosphoserine).

Belongs to the peptidase C19 family. In terms of assembly, interacts with FANCD2 and PCNA. Interacts with WDR48. Interacts with ATAD5; the interaction regulates USP1-mediated PCNA deubiquitination. Post-translationally, autocatalytic cleavage of USP1 following UV irradiation inactivates it, leading to an increase in ubiquitinated PCNA, recruitment of POLH and translesion synthesis. Ubiquitinated by the CRL2(KLHDC2) complex following autocatalytic cleavage, leading to its degradation: the CRL2(KLHDC2) complex recognizes the diglycine (Gly-Gly) at the C-terminus.

The protein localises to the nucleus. The catalysed reaction is Thiol-dependent hydrolysis of ester, thioester, amide, peptide and isopeptide bonds formed by the C-terminal Gly of ubiquitin (a 76-residue protein attached to proteins as an intracellular targeting signal).. Negative regulator of DNA damage repair which specifically deubiquitinates monoubiquitinated FANCD2. Also involved in PCNA-mediated translesion synthesis (TLS) by deubiquitinating monoubiquitinated PCNA. Has almost no deubiquitinating activity by itself and requires the interaction with WDR48 to have a high activity. The chain is Ubiquitin carboxyl-terminal hydrolase 1 from Bos taurus (Bovine).